A 31-amino-acid polypeptide reads, in one-letter code: U14-ctenitoxin-Co1c (31 aa).

As to expression, expressed by the venom gland.

It localises to the secreted. In terms of biological role, not toxic to mice by intracerebroventricular injection. The polypeptide is U14-ctenitoxin-Co1c (Ctenus ornatus (Brazilian spider)).